The following is a 133-amino-acid chain: Small ribosomal subunit protein mS23 (133 aa).

The protein belongs to the mitochondrion-specific ribosomal protein mS23 family. Component of the mitochondrial ribosome small subunit (28S) which comprises a 12S rRNA and about 30 distinct proteins.

The protein resides in the mitochondrion. This chain is Small ribosomal subunit protein mS23 (mrps-23), found in Caenorhabditis elegans.